A 478-amino-acid chain; its full sequence is uncharacterized protein (478 aa).

Positions 2-120 constitute an RCK N-terminal domain; sequence MNMITVIGFG…NIDKIINILE (119 aa).

This is an uncharacterized protein from Methanocaldococcus jannaschii (strain ATCC 43067 / DSM 2661 / JAL-1 / JCM 10045 / NBRC 100440) (Methanococcus jannaschii).